Here is a 254-residue protein sequence, read N- to C-terminus: UPF0246 protein FTW_0267 (254 aa).

It belongs to the UPF0246 family.

The protein is UPF0246 protein FTW_0267 of Francisella tularensis subsp. tularensis (strain WY96-3418).